We begin with the raw amino-acid sequence, 137 residues long: Cellular retinoic acid-binding protein 1 (137 aa).

The Nuclear localization signal signature appears at Lys-21 to Lys-31. Residue Arg-132 to Tyr-134 coordinates all-trans-retinoate.

The protein belongs to the calycin superfamily. Fatty-acid binding protein (FABP) family.

Its subcellular location is the cytoplasm. In terms of biological role, cytosolic CRABPs may regulate the access of retinoic acid to the nuclear retinoic acid receptors. The chain is Cellular retinoic acid-binding protein 1 (Crabp1) from Mus musculus (Mouse).